The primary structure comprises 228 residues: MTSVLIVEDEESLADPLAFLLRKEGFEATVVGDGPSALAEFERSGADIVLLDLMLPGMSGTDVCKQLRARSSVPVIMVTARDSEIDKVVGLELGADDYVTKPYSARELIARIRAVLRRGADNDDAGADDGVLEAGPVRMDVERHVVSVNGEPITLPLKEFDLLEYLMRNSGRVLTRGQLIDRVWGADYVGDTKTLDVHVKRLRSKIEEDPANPVHLVTVRGLGYKLEG.

Positions 3–116 constitute a Response regulatory domain; that stretch reads SVLIVEDEES…ELIARIRAVL (114 aa). D52 bears the 4-aspartylphosphate mark. The ompR/PhoB-type DNA-binding region spans 129-228; it reads DGVLEAGPVR…VRGLGYKLEG (100 aa).

Post-translationally, phosphorylated by SenX3.

Member of the two-component regulatory system SenX3/RegX3 involved in stress response. The system is involved in phosphate starvation response. Once phosphorylated by SenX3, activates the expression of the alkaline phosphatase phoA, the high-affinity phosphate transporter pstSCAB, phnDCE, phnF and senX3. May act as a negative regulator of NhaA. Acts by binding to a DNA motif consisting of an inverted repeat. This Mycolicibacterium smegmatis (strain ATCC 700084 / mc(2)155) (Mycobacterium smegmatis) protein is Sensory transduction protein RegX3.